A 90-amino-acid chain; its full sequence is Probable Fe(2+)-trafficking protein (90 aa).

The protein belongs to the Fe(2+)-trafficking protein family.

In terms of biological role, could be a mediator in iron transactions between iron acquisition and iron-requiring processes, such as synthesis and/or repair of Fe-S clusters in biosynthetic enzymes. The polypeptide is Probable Fe(2+)-trafficking protein (Pseudomonas entomophila (strain L48)).